Reading from the N-terminus, the 173-residue chain is ATP synthase subunit b (173 aa).

The chain crosses the membrane as a helical span at residues 12–32; that stretch reads LDVNPGLVVWTLVTFLVVVLV.

It belongs to the ATPase B chain family. In terms of assembly, F-type ATPases have 2 components, F(1) - the catalytic core - and F(0) - the membrane proton channel. F(1) has five subunits: alpha(3), beta(3), gamma(1), delta(1), epsilon(1). F(0) has three main subunits: a(1), b(2) and c(10-14). The alpha and beta chains form an alternating ring which encloses part of the gamma chain. F(1) is attached to F(0) by a central stalk formed by the gamma and epsilon chains, while a peripheral stalk is formed by the delta and b chains.

The protein localises to the cell inner membrane. Its function is as follows. F(1)F(0) ATP synthase produces ATP from ADP in the presence of a proton or sodium gradient. F-type ATPases consist of two structural domains, F(1) containing the extramembraneous catalytic core and F(0) containing the membrane proton channel, linked together by a central stalk and a peripheral stalk. During catalysis, ATP synthesis in the catalytic domain of F(1) is coupled via a rotary mechanism of the central stalk subunits to proton translocation. In terms of biological role, component of the F(0) channel, it forms part of the peripheral stalk, linking F(1) to F(0). The polypeptide is ATP synthase subunit b (Leptospira interrogans serogroup Icterohaemorrhagiae serovar copenhageni (strain Fiocruz L1-130)).